The sequence spans 450 residues: tRNA-2-methylthio-N(6)-dimethylallyladenosine synthase (450 aa).

In terms of domain architecture, MTTase N-terminal spans 8–128 (KRLYIKTYGC…LPELIARAHR (121 aa)). The [4Fe-4S] cluster site is built by C17, C53, C91, C166, C170, and C173. A Radical SAM core domain is found at 152 to 382 (RPTGVTAFLT…QALLEQQQLA (231 aa)). In terms of domain architecture, TRAM spans 385–447 (AAQAGRVLPV…RNSLAGVLEL (63 aa)).

Belongs to the methylthiotransferase family. MiaB subfamily. In terms of assembly, monomer. The cofactor is [4Fe-4S] cluster.

Its subcellular location is the cytoplasm. The catalysed reaction is N(6)-dimethylallyladenosine(37) in tRNA + (sulfur carrier)-SH + AH2 + 2 S-adenosyl-L-methionine = 2-methylsulfanyl-N(6)-dimethylallyladenosine(37) in tRNA + (sulfur carrier)-H + 5'-deoxyadenosine + L-methionine + A + S-adenosyl-L-homocysteine + 2 H(+). Its function is as follows. Catalyzes the methylthiolation of N6-(dimethylallyl)adenosine (i(6)A), leading to the formation of 2-methylthio-N6-(dimethylallyl)adenosine (ms(2)i(6)A) at position 37 in tRNAs that read codons beginning with uridine. This Phenylobacterium zucineum (strain HLK1) protein is tRNA-2-methylthio-N(6)-dimethylallyladenosine synthase.